Here is a 127-residue protein sequence, read N- to C-terminus: Glycine cleavage system H protein (127 aa).

One can recognise a Lipoyl-binding domain in the interval 22–104 (EVVIGITHFA…YEGAWMVKVE (83 aa)). Residue Lys63 is modified to N6-lipoyllysine.

This sequence belongs to the GcvH family. The glycine cleavage system is composed of four proteins: P, T, L and H. It depends on (R)-lipoate as a cofactor.

In terms of biological role, the glycine cleavage system catalyzes the degradation of glycine. The H protein shuttles the methylamine group of glycine from the P protein to the T protein. Its function is as follows. Is also involved in protein lipoylation via its role as an octanoyl/lipoyl carrier protein intermediate. The protein is Glycine cleavage system H protein of Bacillus cereus (strain ZK / E33L).